Consider the following 105-residue polypeptide: Large ribosomal subunit protein uL24 (105 aa).

It belongs to the universal ribosomal protein uL24 family. In terms of assembly, part of the 50S ribosomal subunit.

In terms of biological role, one of two assembly initiator proteins, it binds directly to the 5'-end of the 23S rRNA, where it nucleates assembly of the 50S subunit. Functionally, one of the proteins that surrounds the polypeptide exit tunnel on the outside of the subunit. The sequence is that of Large ribosomal subunit protein uL24 from Cellvibrio japonicus (strain Ueda107) (Pseudomonas fluorescens subsp. cellulosa).